A 1450-amino-acid chain; its full sequence is Arf-GAP with Rho-GAP domain, ANK repeat and PH domain-containing protein 1 (1450 aa).

The SAM domain occupies 6 to 70 (DAALSVAEWL…LAGLLRAHTS (65 aa)). Positions 81-90 (PVPMKRHIFR) are required for interaction with SH3KBP1. 2 disordered regions span residues 89–144 (FRSP…LPPL) and 173–302 (TKEE…SSLS). Positions 92–102 (PPVPATPPEPL) are enriched in pro residues. Residues 190-199 (QSEEPLSTLP) are compositionally biased toward low complexity. Pro residues predominate over residues 200–219 (QGPPQPPSPPPCPPEIPPKP). Composition is skewed to acidic residues over residues 225–236 (EFDDSDYDEVPE) and 269–286 (EGEE…EDDH). At Ser229 the chain carries Phosphoserine. Tyr231 is modified (phosphotyrosine; by PTK6). The PH 1 domain occupies 327-419 (PVIKAGWLDK…WMQALQQAMA (93 aa)). At Thr354 the chain carries Phosphothreonine. Ser428 carries the phosphoserine modification. Phosphotyrosine occurs at positions 431 and 504. The PH 2 domain occupies 440-529 (QPDRAGSLEL…WLEAMQGAIA (90 aa)). The Arf-GAP domain maps to 535–660 (SEVAERIWAA…RYHPLFGNQE (126 aa)). The segment at 550-576 (CADCGAPQPDWASINLCVVICKRCAGE) adopts a C4-type zinc-finger fold. Phosphoserine is present on Ser738. One can recognise a PH 3 domain in the interval 743–850 (TVSHSGFLYK…WVKCIAKAFV (108 aa)). Positions 954-1139 (ASMGDTLSEQ…DLINHYVVVF (186 aa)) constitute a Rho-GAP domain. A Ras-associating domain is found at 1172-1261 (GDFICTVYLE…SHLVVKKHQA (90 aa)). In terms of domain architecture, PH 4 spans 1274–1396 (GDTKHGMMKF…WFATFLFVQH (123 aa)). Phosphoserine is present on residues Ser1428 and Ser1435.

In terms of assembly, interacts with SH3KBP1/CIN85 (via SH3 domains). The interaction is independent of EGF and does not affect ARAP1 GTPase-activating activity but is involved in regulating ubiquitination and endocytic trafficking of EGFR. ARAP1 competes with E3 ubiquitin-protein ligase CBL for binding to SH3KBP1, preventing interaction of CBL with SH3KBP1; this is likely to regulate SH3KBP1-mediated internalization of EGFR. Interacts with TNFRSF10A. Post-translationally, phosphorylated by PTK6 following EGF stimulation which enhances EGFR signaling by delaying EGFR down-regulation; the interaction is mediated by the SH2 domain of PTK6. Phosphorylation promotes association with the Golgi apparatus and endosomes. As to expression, detected in heart, skeletal muscle, spleen, kidney, liver, placenta, lung, peripheral blood leukocytes, adrenal gland, bone marrow, brain, lymph node, mammary gland, prostate, spinal cord, stomach, thyroid and trachea.

The protein localises to the cytoplasm. It localises to the golgi apparatus. It is found in the trans-Golgi network. Its subcellular location is the golgi stack. The protein resides in the cell membrane. The protein localises to the endosome. It localises to the multivesicular body. It is found in the cell projection. Its subcellular location is the ruffle. The protein resides in the podosome. The protein localises to the early endosome. In terms of biological role, phosphatidylinositol 3,4,5-trisphosphate-dependent GTPase-activating protein that modulates actin cytoskeleton remodeling by regulating ARF and RHO family members. Activated by phosphatidylinositol 3,4,5-trisphosphate (PtdIns(3,4,5)P3) binding and, to a lesser extent, by phosphatidylinositol 3,4-bisphosphate (PtdIns(3,4)P2) binding. Has a preference for ARF1 and ARF5. Positively regulates the ring size of circular dorsal ruffles and promotes macropinocytosis. Acts as a bridging factor in osteoclasts to control actin and membrane dynamics. Regulates the condensing of osteoclast podosomes into sealing zones which segregate the bone-facing membrane from other membrane domains and are required for osteoclast resorption activity. Also regulates recruitment of the AP-3 complex to endosomal membranes and trafficking of lysosomal membrane proteins to the ruffled membrane border of osteoclasts to modulate bone resorption. Regulates the endocytic trafficking of EGFR. Regulates the incorporation of CD63 and CD9 into multivesicular bodies. Required in the retinal pigment epithelium (RPE) for photoreceptor survival due to its role in promoting RPE phagocytosis. The chain is Arf-GAP with Rho-GAP domain, ANK repeat and PH domain-containing protein 1 (ARAP1) from Homo sapiens (Human).